The chain runs to 247 residues: Small ribosomal subunit protein uS2 (247 aa).

Belongs to the universal ribosomal protein uS2 family.

The chain is Small ribosomal subunit protein uS2 from Ralstonia nicotianae (strain ATCC BAA-1114 / GMI1000) (Ralstonia solanacearum).